The following is a 1316-amino-acid chain: DNA-directed RNA polymerase subunit beta' (1316 aa).

The Zn(2+) site is built by C60, C62, C75, and C78. Mg(2+)-binding residues include D535, D537, and D539. Residues C891, C968, C975, and C978 each coordinate Zn(2+).

Belongs to the RNA polymerase beta' chain family. The RNAP catalytic core consists of 2 alpha, 1 beta, 1 beta' and 1 omega subunit. When a sigma factor is associated with the core the holoenzyme is formed, which can initiate transcription. Mg(2+) is required as a cofactor. It depends on Zn(2+) as a cofactor.

It catalyses the reaction RNA(n) + a ribonucleoside 5'-triphosphate = RNA(n+1) + diphosphate. In terms of biological role, DNA-dependent RNA polymerase catalyzes the transcription of DNA into RNA using the four ribonucleoside triphosphates as substrates. The protein is DNA-directed RNA polymerase subunit beta' of Mycobacterium tuberculosis (strain ATCC 25177 / H37Ra).